Consider the following 419-residue polypeptide: E3 ubiquitin-protein ligase pellino homolog 2 (419 aa).

The FHA; atypical domain maps to 15–202; the sequence is EPVKYRELVV…HPQGGFTEES (188 aa).

The protein belongs to the pellino family. As to quaternary structure, interacts with TRAF6, IRAK4 and MAP3K7. Interacts with IRAK1. Interacts with BCL10; this interaction is impaired by SOCS3. Phosphorylated by IRAK1 and IRAK4 enhancing its E3 ligase activity. Widely expressed both in embryos and adult. Weakly or not expressed in spleen and thymus.

It carries out the reaction S-ubiquitinyl-[E2 ubiquitin-conjugating enzyme]-L-cysteine + [acceptor protein]-L-lysine = [E2 ubiquitin-conjugating enzyme]-L-cysteine + N(6)-ubiquitinyl-[acceptor protein]-L-lysine.. It functions in the pathway protein modification; protein ubiquitination. In terms of biological role, E3 ubiquitin ligase catalyzing the covalent attachment of ubiquitin moieties onto substrate proteins. Involved in the TLR and IL-1 signaling pathways via interaction with the complex containing IRAK kinases and TRAF6. Mediates IL1B-induced IRAK1 'Lys-63'-linked polyubiquitination and possibly 'Lys-48'-linked ubiquitination. May be important for LPS- and IL1B-induced MAP3K7-dependent, but not MAP3K3-dependent, NF-kappa-B activation. Can activate the MAP (mitogen activated protein) kinase pathway leading to activation of ELK1. The polypeptide is E3 ubiquitin-protein ligase pellino homolog 2 (Peli2) (Mus musculus (Mouse)).